The sequence spans 105 residues: Met repressor (105 aa).

It belongs to the MetJ family. As to quaternary structure, homodimer.

Its subcellular location is the cytoplasm. Its function is as follows. This regulatory protein, when combined with SAM (S-adenosylmethionine) represses the expression of the methionine regulon and of enzymes involved in SAM synthesis. The chain is Met repressor from Vibrio vulnificus (strain CMCP6).